Reading from the N-terminus, the 258-residue chain is Imidazole glycerol phosphate synthase subunit HisF (258 aa).

Active-site residues include Asp-11 and Asp-130.

Belongs to the HisA/HisF family. Heterodimer of HisH and HisF.

Its subcellular location is the cytoplasm. The enzyme catalyses 5-[(5-phospho-1-deoxy-D-ribulos-1-ylimino)methylamino]-1-(5-phospho-beta-D-ribosyl)imidazole-4-carboxamide + L-glutamine = D-erythro-1-(imidazol-4-yl)glycerol 3-phosphate + 5-amino-1-(5-phospho-beta-D-ribosyl)imidazole-4-carboxamide + L-glutamate + H(+). It functions in the pathway amino-acid biosynthesis; L-histidine biosynthesis; L-histidine from 5-phospho-alpha-D-ribose 1-diphosphate: step 5/9. Its function is as follows. IGPS catalyzes the conversion of PRFAR and glutamine to IGP, AICAR and glutamate. The HisF subunit catalyzes the cyclization activity that produces IGP and AICAR from PRFAR using the ammonia provided by the HisH subunit. This is Imidazole glycerol phosphate synthase subunit HisF from Stenotrophomonas maltophilia (strain K279a).